The primary structure comprises 440 residues: Dynein axonemal assembly factor 11 (440 aa).

4 LRR repeats span residues 20–43, 44–65, 66–89, and 90–110; these read IFSLEELSLHQQDIQRIEHIHKWC, RDLKILYLQNNLIPKIENVGRL, KKLEYLNLALNNIEVIENLEGCES, and LQKLDLTVNFVGRLSSVETLK. In terms of domain architecture, LRRCT spans 128-146; it reads YQGYRQYVVATVPQLQSLD. Residues 178-192 are compositionally biased toward basic and acidic residues; it reads EEREKQKSNANEHPE. Disordered stretches follow at residues 178–267 and 363–440; these read EERE…RTLI and PKKR…PPLM. Residues 193-211 show a composition bias toward polar residues; that stretch reads INQSLSESQNGTQQYPESS. Residues 236–259 are compositionally biased toward basic and acidic residues; the sequence is SRLEAHRHLEEKRRANEKEKEKPK. In terms of domain architecture, CS spans 276 to 374; the sequence is VNEPKLDFSL…KRTIRPTSVT (99 aa). Polar residues predominate over residues 369–378; that stretch reads RPTSVTSNQN. Composition is skewed to basic and acidic residues over residues 379–392 and 420–431; these read NKKDTRAAPRRELL and GLEERPVSKDFV.

It belongs to the tilB family. Interacts with dvl2. Interacts with kur. In terms of tissue distribution, expressed in kinocilia of hair cells.

It localises to the cytoplasm. The protein localises to the dynein axonemal particle. Its subcellular location is the cell projection. It is found in the cilium. Plays a crucial role in regulating cilia motility in pronephric tubules, cloaca and neural tube. Required for establishing left-right asymmetry of the body plan; controls cell fate and convergent extension (CE) movements during gastrulation, respectively, via the Wnt and the planar cell polarity (PCP) signaling pathways. Required for the proper development of renal glomeruli and tubules. This chain is Dynein axonemal assembly factor 11 (dnaaf11), found in Danio rerio (Zebrafish).